Here is a 229-residue protein sequence, read N- to C-terminus: NAD(P)H-quinone oxidoreductase subunit K, chloroplastic (229 aa).

[4Fe-4S] cluster contacts are provided by Cys43, Cys44, Cys108, and Cys139.

The protein belongs to the complex I 20 kDa subunit family. As to quaternary structure, NDH is composed of at least 16 different subunits, 5 of which are encoded in the nucleus. [4Fe-4S] cluster is required as a cofactor.

It is found in the plastid. The protein localises to the chloroplast thylakoid membrane. It catalyses the reaction a plastoquinone + NADH + (n+1) H(+)(in) = a plastoquinol + NAD(+) + n H(+)(out). The enzyme catalyses a plastoquinone + NADPH + (n+1) H(+)(in) = a plastoquinol + NADP(+) + n H(+)(out). Functionally, NDH shuttles electrons from NAD(P)H:plastoquinone, via FMN and iron-sulfur (Fe-S) centers, to quinones in the photosynthetic chain and possibly in a chloroplast respiratory chain. The immediate electron acceptor for the enzyme in this species is believed to be plastoquinone. Couples the redox reaction to proton translocation, and thus conserves the redox energy in a proton gradient. The protein is NAD(P)H-quinone oxidoreductase subunit K, chloroplastic of Aethionema grandiflorum (Persian stone-cress).